A 367-amino-acid polypeptide reads, in one-letter code: GTP cyclohydrolase FolE2 (367 aa).

This sequence belongs to the GTP cyclohydrolase IV family.

The catalysed reaction is GTP + H2O = 7,8-dihydroneopterin 3'-triphosphate + formate + H(+). It participates in cofactor biosynthesis; 7,8-dihydroneopterin triphosphate biosynthesis; 7,8-dihydroneopterin triphosphate from GTP: step 1/1. In terms of biological role, converts GTP to 7,8-dihydroneopterin triphosphate. The sequence is that of GTP cyclohydrolase FolE2 from Ruegeria pomeroyi (strain ATCC 700808 / DSM 15171 / DSS-3) (Silicibacter pomeroyi).